We begin with the raw amino-acid sequence, 244 residues long: MILNFIIDSSSFEKGLGNIAIWSKLNDPKLTINAYLPLFTIQELDFQRFKRKSVVAKRALHFIDLLQDSTSFKLHLEYPELNEAISWNETVKLCQQNSHTSLSQHQISVIPIRFKKLLKSCYYKCHYKSHDLDEDIDHTNEKSDPDDKGWVLVTEDDTVRSLATQFQIPFISVVEADAIINACIKDKSYVVNEKFSKTVIKKANKVKEQEDGKKVFVTDFKNDFLAPRAKSGELWTPTSAKNKS.

It is found in the cytoplasm. Involved in nonsense-mediated decay of mRNAs containing premature stop codons. This chain is Nonsense-mediated decay protein 4 (NMD4), found in Kluyveromyces lactis (strain ATCC 8585 / CBS 2359 / DSM 70799 / NBRC 1267 / NRRL Y-1140 / WM37) (Yeast).